Reading from the N-terminus, the 120-residue chain is Large ribosomal subunit protein bL21 (120 aa).

Belongs to the bacterial ribosomal protein bL21 family. Part of the 50S ribosomal subunit. Contacts protein L20.

This protein binds to 23S rRNA in the presence of protein L20. The protein is Large ribosomal subunit protein bL21 of Rhizorhabdus wittichii (strain DSM 6014 / CCUG 31198 / JCM 15750 / NBRC 105917 / EY 4224 / RW1) (Sphingomonas wittichii).